We begin with the raw amino-acid sequence, 249 residues long: Dof zinc finger protein DOF4.5 (249 aa).

The Dof-type zinc finger occupies 25–79; that stretch reads RVCARCDSDNTKFCYYNNYCEFQPRYFCKNCRRYWTHGGALRNIPIGGSSRAKRA. Zn(2+)-binding residues include cysteine 27, cysteine 30, cysteine 52, and cysteine 55.

It is found in the nucleus. Its function is as follows. Transcription factor that binds specifically to a 5'-AA[AG]G-3' consensus core sequence. This chain is Dof zinc finger protein DOF4.5 (DOF4.5), found in Arabidopsis thaliana (Mouse-ear cress).